We begin with the raw amino-acid sequence, 378 residues long: Chaperone protein DnaJ (378 aa).

In terms of domain architecture, J spans 4–68; it reads DFYEILGVSR…ETRARYDRFG (65 aa). Residues 136 to 218 form a CR-type zinc finger; it reads GGEKEIRIPH…CGGAGRKQET (83 aa). Zn(2+)-binding residues include C149, C152, C166, C169, C192, C195, C206, and C209. CXXCXGXG motif repeat units lie at residues 149-156, 166-173, 192-199, and 206-213; these read CKTCSGSG, CGTCNGTG, CPTCNGEG, and CESCGGAG.

This sequence belongs to the DnaJ family. In terms of assembly, homodimer. Zn(2+) serves as cofactor.

The protein localises to the cytoplasm. In terms of biological role, participates actively in the response to hyperosmotic and heat shock by preventing the aggregation of stress-denatured proteins and by disaggregating proteins, also in an autonomous, DnaK-independent fashion. Unfolded proteins bind initially to DnaJ; upon interaction with the DnaJ-bound protein, DnaK hydrolyzes its bound ATP, resulting in the formation of a stable complex. GrpE releases ADP from DnaK; ATP binding to DnaK triggers the release of the substrate protein, thus completing the reaction cycle. Several rounds of ATP-dependent interactions between DnaJ, DnaK and GrpE are required for fully efficient folding. Also involved, together with DnaK and GrpE, in the DNA replication of plasmids through activation of initiation proteins. In Picosynechococcus sp. (strain ATCC 27264 / PCC 7002 / PR-6) (Agmenellum quadruplicatum), this protein is Chaperone protein DnaJ.